We begin with the raw amino-acid sequence, 205 residues long: Deoxyuridine 5'-triphosphate nucleotidohydrolase (205 aa).

Ser-54 bears the Phosphoserine mark. Residues 126-128, 140-143, Gly-151, and 199-200 each bind substrate; these read RSG, GVID, and FG.

The protein belongs to the dUTPase family. Homotrimer. The cofactor is Mg(2+). As to expression, expressed in all tissues examined. Higher levels in heart and kidney.

The protein resides in the cytoplasm. It is found in the nucleus. It catalyses the reaction dUTP + H2O = dUMP + diphosphate + H(+). It functions in the pathway pyrimidine metabolism; dUMP biosynthesis; dUMP from dCTP (dUTP route): step 2/2. Catalyzes the cleavage of 2'-deoxyuridine 5'-triphosphate (dUTP) into 2'-deoxyuridine 5'-monophosphate (dUMP) and inorganic pyrophosphate and through its action efficiently prevents uracil misincorporation into DNA and at the same time provides dUMP, the substrate for de novo thymidylate biosynthesis. Inhibits peroxisome proliferator-activated receptor (PPAR) activity by binding of its N-terminal to PPAR, preventing the latter's dimerization with retinoid X receptor. Essential for embryonic development. This chain is Deoxyuridine 5'-triphosphate nucleotidohydrolase (Dut), found in Rattus norvegicus (Rat).